Here is a 409-residue protein sequence, read N- to C-terminus: MELRVGNRYRLGRKIGSGSFGDIYLGTDISVGEEVAIKLECVKTKHPQLHIESKIYKMMQGGVGIPTIKWCGAEGDYNVMVMELLGPSLEDLFNFCSRKFSLKTVLLLADQMISRIEYIHSKNFIHRDVKPDNFLMGLGKKGNLVYIIDFGLAKKYRDARTHQHIPYRENKNLTGTARYASINTHLGIEQSRRDDLESLGYVLMYFNLGSLPWQGLKAATKRQKYERISEKKMSTPIEVLCKGYPSEFATYLNFCRSLRFDDKPDYSYLRQLFRNLFHRQGFSYDYVFDWNMLKFGANRTAEEADRERRERDERMRHSRNPAARGIPAASGRPRPTQDGAPPTPLTPTSHTANTSSPRPVTGMERERKVSMRLHRGAPVNVSSSDLTGRQDTSRMSTSQNSIPFDHHGK.

A Protein kinase domain is found at 9–277 (YRLGRKIGSG…YLRQLFRNLF (269 aa)). ATP-binding positions include 15–23 (IGSGSFGDI) and Lys38. The active-site Proton acceptor is the Asp128. Residues 300 to 315 (TAEEADRERRERDERM) are compositionally biased toward basic and acidic residues. The interval 300–409 (TAEEADRERR…NSIPFDHHGK (110 aa)) is disordered. Residues 317 to 341 (HSRNPAARGIPAASGRPRPTQDGAP) are autoinhibitory. Composition is skewed to polar residues over residues 346 to 358 (TPTS…SSPR) and 380 to 402 (NVSS…QNSI).

The protein belongs to the protein kinase superfamily. Monomer. Interacts with per1 and per2. Component of the circadian core oscillator. Autophosphorylated on serine and threonine residues.

Its subcellular location is the cytoplasm. It is found in the nucleus. The catalysed reaction is L-seryl-[protein] + ATP = O-phospho-L-seryl-[protein] + ADP + H(+). It carries out the reaction L-threonyl-[protein] + ATP = O-phospho-L-threonyl-[protein] + ADP + H(+). With respect to regulation, exhibits substrate-dependent heparin activation. Casein kinases are operationally defined by their preferential utilization of acidic proteins such as caseins as substrates. Central component of the circadian clock. May act as a negative regulator of circadian rhythmicity by phosphorylating per1 and per2, which may lead to their degradation. Participates in wnt signaling. This Danio rerio (Zebrafish) protein is Casein kinase I isoform delta-B (csnk1db).